The chain runs to 203 residues: dITP/XTP pyrophosphatase (203 aa).

7 to 12 (TGNRDK) lines the substrate pocket. Aspartate 73 (proton acceptor) is an active-site residue. Residue aspartate 73 coordinates Mg(2+). Residues serine 74, 155–158 (FGYD), lysine 178, and 183–184 (HR) each bind substrate.

Belongs to the HAM1 NTPase family. As to quaternary structure, homodimer. Mg(2+) serves as cofactor.

It catalyses the reaction XTP + H2O = XMP + diphosphate + H(+). The catalysed reaction is dITP + H2O = dIMP + diphosphate + H(+). The enzyme catalyses ITP + H2O = IMP + diphosphate + H(+). Pyrophosphatase that catalyzes the hydrolysis of nucleoside triphosphates to their monophosphate derivatives, with a high preference for the non-canonical purine nucleotides XTP (xanthosine triphosphate), dITP (deoxyinosine triphosphate) and ITP. Seems to function as a house-cleaning enzyme that removes non-canonical purine nucleotides from the nucleotide pool, thus preventing their incorporation into DNA/RNA and avoiding chromosomal lesions. The sequence is that of dITP/XTP pyrophosphatase from Wolinella succinogenes (strain ATCC 29543 / DSM 1740 / CCUG 13145 / JCM 31913 / LMG 7466 / NCTC 11488 / FDC 602W) (Vibrio succinogenes).